A 128-amino-acid chain; its full sequence is Protein ApaG (128 aa).

The region spanning 1 to 123 is the ApaG domain; the sequence is MTSSPDITVS…FRLDIAPESG (123 aa).

The chain is Protein ApaG from Deinococcus radiodurans (strain ATCC 13939 / DSM 20539 / JCM 16871 / CCUG 27074 / LMG 4051 / NBRC 15346 / NCIMB 9279 / VKM B-1422 / R1).